Reading from the N-terminus, the 70-residue chain is ATP synthase subunit c (70 aa).

A run of 2 helical transmembrane segments spans residues 4 to 24 (IAAGIAAGLAAVGAGVGNGLV) and 47 to 67 (FLGVGLIEALPILSIVIAFLV).

The protein belongs to the ATPase C chain family. As to quaternary structure, F-type ATPases have 2 components, F(1) - the catalytic core - and F(0) - the membrane proton channel. F(1) has five subunits: alpha(3), beta(3), gamma(1), delta(1), epsilon(1). F(0) has three main subunits: a(1), b(2) and c(10-14). The alpha and beta chains form an alternating ring which encloses part of the gamma chain. F(1) is attached to F(0) by a central stalk formed by the gamma and epsilon chains, while a peripheral stalk is formed by the delta and b chains.

It localises to the cell membrane. In terms of biological role, f(1)F(0) ATP synthase produces ATP from ADP in the presence of a proton or sodium gradient. F-type ATPases consist of two structural domains, F(1) containing the extramembraneous catalytic core and F(0) containing the membrane proton channel, linked together by a central stalk and a peripheral stalk. During catalysis, ATP synthesis in the catalytic domain of F(1) is coupled via a rotary mechanism of the central stalk subunits to proton translocation. Its function is as follows. Key component of the F(0) channel; it plays a direct role in translocation across the membrane. A homomeric c-ring of between 10-14 subunits forms the central stalk rotor element with the F(1) delta and epsilon subunits. The chain is ATP synthase subunit c from Limosilactobacillus fermentum (strain NBRC 3956 / LMG 18251) (Lactobacillus fermentum).